Reading from the N-terminus, the 428-residue chain is Serine--tRNA ligase (428 aa).

T231–E233 serves as a coordination point for L-serine. R262–E264 serves as a coordination point for ATP. E285 provides a ligand contact to L-serine. E349–S352 is a binding site for ATP. Position 385 (S385) interacts with L-serine.

It belongs to the class-II aminoacyl-tRNA synthetase family. Type-1 seryl-tRNA synthetase subfamily. Homodimer. The tRNA molecule binds across the dimer.

It localises to the cytoplasm. It carries out the reaction tRNA(Ser) + L-serine + ATP = L-seryl-tRNA(Ser) + AMP + diphosphate + H(+). It catalyses the reaction tRNA(Sec) + L-serine + ATP = L-seryl-tRNA(Sec) + AMP + diphosphate + H(+). It participates in aminoacyl-tRNA biosynthesis; selenocysteinyl-tRNA(Sec) biosynthesis; L-seryl-tRNA(Sec) from L-serine and tRNA(Sec): step 1/1. In terms of biological role, catalyzes the attachment of serine to tRNA(Ser). Is also able to aminoacylate tRNA(Sec) with serine, to form the misacylated tRNA L-seryl-tRNA(Sec), which will be further converted into selenocysteinyl-tRNA(Sec). The protein is Serine--tRNA ligase of Staphylococcus aureus (strain MRSA252).